Here is a 455-residue protein sequence, read N- to C-terminus: Succinyl-CoA--L-malate CoA-transferase alpha subunit (455 aa).

Positions 1–58 are disordered; sequence MAKASRLTRSTGQPTEVSEGQVTGTSEMPPTGEEPSGHAESKPPASDPMSTPGTGQEQ. Polar residues-rich tracts occupy residues 7-28 and 48-58; these read LTRSTGQPTEVSEGQVTGTSEM and PMSTPGTGQEQ. D227 (nucleophile) is an active-site residue.

It belongs to the CoA-transferase III family. In terms of assembly, forms a large complex composed of six heterodimers (alpha, beta).

It catalyses the reaction succinyl-CoA + (S)-malate = (S)-malyl-CoA + succinate. It carries out the reaction (3S)-citramalate + succinyl-CoA = (3S)-citramalyl-CoA + succinate. Functionally, involved in the 3-hydroxypropionate cycle used for autotrophic carbon dioxide fixation. Catalyzes the transfer of CoA moiety from succinyl-CoA to L-malate to yield L-malyl-CoA. This chain is Succinyl-CoA--L-malate CoA-transferase alpha subunit (smtA), found in Chloroflexus aurantiacus (strain ATCC 29366 / DSM 635 / J-10-fl).